A 61-amino-acid chain; its full sequence is Small ribosomal subunit protein uS14B (61 aa).

C24, C27, C40, and C43 together coordinate Zn(2+).

It belongs to the universal ribosomal protein uS14 family. Zinc-binding uS14 subfamily. As to quaternary structure, part of the 30S ribosomal subunit. Contacts proteins S3 and S10. Zn(2+) serves as cofactor.

Binds 16S rRNA, required for the assembly of 30S particles and may also be responsible for determining the conformation of the 16S rRNA at the A site. This chain is Small ribosomal subunit protein uS14B, found in Oceanobacillus iheyensis (strain DSM 14371 / CIP 107618 / JCM 11309 / KCTC 3954 / HTE831).